A 201-amino-acid polypeptide reads, in one-letter code: Dephospho-CoA kinase (201 aa).

Residues 2-201 (MIGLTGGIAS…KRWKVIPEDQ (200 aa)) form the DPCK domain. 10 to 15 (ASGKSS) provides a ligand contact to ATP.

The protein belongs to the CoaE family.

It is found in the cytoplasm. The enzyme catalyses 3'-dephospho-CoA + ATP = ADP + CoA + H(+). Its pathway is cofactor biosynthesis; coenzyme A biosynthesis; CoA from (R)-pantothenate: step 5/5. Its function is as follows. Catalyzes the phosphorylation of the 3'-hydroxyl group of dephosphocoenzyme A to form coenzyme A. The chain is Dephospho-CoA kinase from Halalkalibacterium halodurans (strain ATCC BAA-125 / DSM 18197 / FERM 7344 / JCM 9153 / C-125) (Bacillus halodurans).